A 213-amino-acid chain; its full sequence is UPF0056 membrane protein AF_2111 (213 aa).

6 helical membrane passes run 1-21 (MDIA…FIII), 51-71 (IIAF…LDYF), 75-95 (ISSL…DILL), 118-138 (VFPL…GIVL), 142-162 (AGDV…YSIV), and 181-201 (ADIA…EFVF).

Belongs to the UPF0056 (MarC) family.

The protein resides in the cell membrane. The chain is UPF0056 membrane protein AF_2111 from Archaeoglobus fulgidus (strain ATCC 49558 / DSM 4304 / JCM 9628 / NBRC 100126 / VC-16).